The following is a 340-amino-acid chain: Guanine nucleotide-binding protein G(I)/G(S)/G(T) subunit beta-1 (340 aa).

An N-acetylserine modification is found at Ser2. Ser2 carries the post-translational modification Phosphoserine. 7 WD repeats span residues 46 to 94 (RTRR…HAIP), 95 to 140 (LRSS…RELA), 141 to 181 (GHTG…TTFT), 182 to 223 (GHTG…QTFT), 224 to 267 (GHES…YSHD), 268 to 309 (NIIC…GVLA), and 310 to 340 (GHDD…KIWN). His266 is subject to Phosphohistidine.

This sequence belongs to the WD repeat G protein beta family. As to quaternary structure, g proteins are composed of 3 units, alpha, beta and gamma. The heterodimer formed by GNB1 and GNG2 interacts with ARHGEF5. The heterodimer formed by GNB1 and GNG2 interacts with GRK2. Forms a complex with GNAO1 and GNG3. Interacts with ARHGEF18 and RASD2. Forms complexes with TAS2R14 and G-proteins; these complexes play a role in the perception of bitterness. Component of the TAS2R14-GNAI1 complex, consisting of TAS2R14, GNAI1, GNB1 and GNG2. Component of the TAS2R14-GNAT3 complex, consisting of TAS2R14, GNAT3, GNB1 and GNG2. Component of the TAS2R14-GNAS2 complex, consisting of TAS2R14, GNAS2, GNB1 and GNG2. In terms of processing, phosphorylation at His-266 by NDKB contributes to G protein activation by increasing the high energetic phosphate transfer onto GDP.

Its function is as follows. Guanine nucleotide-binding proteins (G proteins) are involved as a modulator or transducer in various transmembrane signaling systems. The beta and gamma chains are required for the GTPase activity, for replacement of GDP by GTP, and for G protein-effector interaction. This chain is Guanine nucleotide-binding protein G(I)/G(S)/G(T) subunit beta-1 (GNB1), found in Pongo abelii (Sumatran orangutan).